The chain runs to 129 residues: Large ribosomal subunit protein bL17 (129 aa).

The protein belongs to the bacterial ribosomal protein bL17 family. In terms of assembly, part of the 50S ribosomal subunit. Contacts protein L32.

The polypeptide is Large ribosomal subunit protein bL17 (Yersinia enterocolitica serotype O:8 / biotype 1B (strain NCTC 13174 / 8081)).